We begin with the raw amino-acid sequence, 381 residues long: Protein COS1 (381 aa).

The Cytoplasmic portion of the chain corresponds to 1–42 (MKENELKNEKSVDVLSFKQLESQKIVLPQDLFRSSFTWFCYE). Residues 43–63 (IYKSLAFRIWMLLWLPLSVWW) traverse the membrane as a helical segment. Residues 64-72 (KLSNNCIYP) lie on the Extracellular side of the membrane. A helical transmembrane segment spans residues 73–93 (LIVSLLVLFLGPIFVLVICGL). Over 94–231 (SRKRSLSKQL…YRFKLTWFLK (138 aa)) the chain is Cytoplasmic. The helical transmembrane segment at 232-252 (RISNIFMLIPFLNFLCCIYVS) threads the bilayer. Over 253–254 (RG) the chain is Extracellular. A helical membrane pass occupies residues 255–275 (MCLLLRTFYLGWILFMLVQGF). At 276-381 (QNMRMIVLSV…QLSCSEESLA (106 aa)) the chain is on the cytoplasmic side.

The protein belongs to the DUP/COS family.

It localises to the membrane. The chain is Protein COS1 (COS1) from Saccharomyces cerevisiae (strain ATCC 204508 / S288c) (Baker's yeast).